The chain runs to 567 residues: Myo-inositol transporter 1 (567 aa).

The Cytoplasmic segment spans residues M1–A88. Residues I14 to L42 are disordered. Positions T16 to A33 are enriched in polar residues. A helical transmembrane segment spans residues A89 to I109. At K110–E123 the chain is on the extracellular side. Residues V124–S144 traverse the membrane as a helical segment. Residues D145–R150 are Cytoplasmic-facing. Residues L151–H171 traverse the membrane as a helical segment. Residues T172–R180 lie on the Extracellular side of the membrane. The chain crosses the membrane as a helical span at residues F181–L201. Residues A202–R209 lie on the Cytoplasmic side of the membrane. The helical transmembrane segment at L210–A230 threads the bilayer. Topologically, residues S231–R240 are extracellular. Residues W241–P261 traverse the membrane as a helical segment. Residues E262 to Q343 lie on the Cytoplasmic side of the membrane. The chain crosses the membrane as a helical span at residues L344–N364. A glycan (N-linked (GlcNAc...) asparagine) is linked at N365. At N365 to T367 the chain is on the extracellular side. The helical transmembrane segment at A368–V388 threads the bilayer. Over D389 to M397 the chain is Cytoplasmic. Residues L398–L418 form a helical membrane-spanning segment. Over T419 to S435 the chain is Extracellular. A helical transmembrane segment spans residues L436–G456. Residues N457 to S476 are Cytoplasmic-facing. A helical transmembrane segment spans residues I477–M497. Residues D498–S503 lie on the Extracellular side of the membrane. A helical membrane pass occupies residues G504–Y524. Topologically, residues P525 to E567 are cytoplasmic.

The protein belongs to the major facilitator superfamily. Sugar transporter (TC 2.A.1.1) family.

The protein resides in the cell membrane. The enzyme catalyses myo-inositol(out) + H(+)(out) = myo-inositol(in) + H(+)(in). In terms of biological role, may function as a transporter or as a sensor for myo-inositol. This chain is Myo-inositol transporter 1, found in Cryptococcus neoformans var. grubii serotype A (strain H99 / ATCC 208821 / CBS 10515 / FGSC 9487) (Filobasidiella neoformans var. grubii).